The chain runs to 135 residues: Phosphomevalonate dehydratase small subunit (135 aa).

Residue Ser67 is the Proton acceptor of the active site.

This sequence belongs to the AcnX type II small subunit family. In terms of assembly, heterodimer composed of a large subunit (PMDh-L) and a small subunit (PMDh-S).

The catalysed reaction is (R)-5-phosphomevalonate = (2E)-3-methyl-5-phosphooxypent-2-enoate + H2O. The protein operates within isoprenoid biosynthesis; isopentenyl diphosphate biosynthesis via mevalonate pathway. In terms of biological role, component of a hydro-lyase that catalyzes the dehydration of mevalonate 5-phosphate (MVA5P) to form trans-anhydromevalonate 5-phosphate (tAHMP). Involved in the archaeal mevalonate (MVA) pathway, which provides fundamental precursors for isoprenoid biosynthesis, such as isopentenyl diphosphate (IPP) and dimethylallyl diphosphate (DMAPP). The sequence is that of Phosphomevalonate dehydratase small subunit from Methanopyrus kandleri (strain AV19 / DSM 6324 / JCM 9639 / NBRC 100938).